A 123-amino-acid polypeptide reads, in one-letter code: Large ribosomal subunit protein uL14 (123 aa).

The protein belongs to the universal ribosomal protein uL14 family. Part of the 50S ribosomal subunit. Forms a cluster with proteins L3 and L19. In the 70S ribosome, L14 and L19 interact and together make contacts with the 16S rRNA in bridges B5 and B8.

Functionally, binds to 23S rRNA. Forms part of two intersubunit bridges in the 70S ribosome. This Cronobacter sakazakii (strain ATCC BAA-894) (Enterobacter sakazakii) protein is Large ribosomal subunit protein uL14.